Consider the following 267-residue polypeptide: tRNA pseudouridine synthase A (267 aa).

D52 serves as the catalytic Nucleophile. A substrate-binding site is contributed by Y113.

This sequence belongs to the tRNA pseudouridine synthase TruA family. In terms of assembly, homodimer.

It carries out the reaction uridine(38/39/40) in tRNA = pseudouridine(38/39/40) in tRNA. In terms of biological role, formation of pseudouridine at positions 38, 39 and 40 in the anticodon stem and loop of transfer RNAs. The sequence is that of tRNA pseudouridine synthase A from Chlamydia pneumoniae (Chlamydophila pneumoniae).